Consider the following 304-residue polypeptide: Secreted mono- and diacylglycerol lipase MDL4 (304 aa).

The signal sequence occupies residues 1-19 (MRFGGVVSLVLGFIVSVLA). Cysteine 55 and cysteine 297 form a disulfide bridge. Residues asparagine 102 and asparagine 161 are each glycosylated (N-linked (GlcNAc...) asparagine). Serine 171 serves as the catalytic Nucleophile. Residue aspartate 228 is part of the active site. The N-linked (GlcNAc...) asparagine glycan is linked to asparagine 253. Histidine 281 is an active-site residue.

This sequence belongs to the AB hydrolase superfamily. Lipase family. Class 3 subfamily.

The protein resides in the secreted. The protein localises to the cell wall. It carries out the reaction a monoacylglycerol + H2O = glycerol + a fatty acid + H(+). It catalyses the reaction a diacylglycerol + H2O = a monoacylglycerol + a fatty acid + H(+). In terms of biological role, secreted lipase involved in Dandruff and seborrheic dermatitis (D/SD) probably via lipase-mediated breakdown of sebaceous lipids and release of irritating free fatty acids. Shows activity against monoglyceride and diglyceride substrates, but not triglyceride substrates and does not exhibit regio-selective production of diacylglycerols. Cleaves oleic acid from 1,2 isomers of diolein on both the 1 and the 2 position of the glycerol backbone, resulting mainly in free fatty acids but no monoolein is detected. Shows activity on monoolein and liberates mostly free fatty acids, but can also perform the reverse reaction and produce diolein. The polypeptide is Secreted mono- and diacylglycerol lipase MDL4 (Malassezia globosa (strain ATCC MYA-4612 / CBS 7966) (Dandruff-associated fungus)).